The chain runs to 475 residues: Aspartyl/glutamyl-tRNA(Asn/Gln) amidotransferase subunit B (475 aa).

Belongs to the GatB/GatE family. GatB subfamily. Heterotrimer of A, B and C subunits.

The enzyme catalyses L-glutamyl-tRNA(Gln) + L-glutamine + ATP + H2O = L-glutaminyl-tRNA(Gln) + L-glutamate + ADP + phosphate + H(+). It carries out the reaction L-aspartyl-tRNA(Asn) + L-glutamine + ATP + H2O = L-asparaginyl-tRNA(Asn) + L-glutamate + ADP + phosphate + 2 H(+). Allows the formation of correctly charged Asn-tRNA(Asn) or Gln-tRNA(Gln) through the transamidation of misacylated Asp-tRNA(Asn) or Glu-tRNA(Gln) in organisms which lack either or both of asparaginyl-tRNA or glutaminyl-tRNA synthetases. The reaction takes place in the presence of glutamine and ATP through an activated phospho-Asp-tRNA(Asn) or phospho-Glu-tRNA(Gln). This chain is Aspartyl/glutamyl-tRNA(Asn/Gln) amidotransferase subunit B, found in Chlorobium limicola (strain DSM 245 / NBRC 103803 / 6330).